The chain runs to 326 residues: Ras association domain-containing protein 2 (326 aa).

Residues Tyr176–Gln264 form the Ras-associating domain. An SARAH domain is found at Val272–Ile319.

Interacts directly with activated KRAS in a GTP-dependent manner. Interacts (via SARAH domain) with STK3/MST2 and STK4/MST1. Phosphorylated by STK3/MST2 and STK4/MST1.

It is found in the nucleus. The protein localises to the cytoplasm. Its subcellular location is the chromosome. The protein resides in the centromere. It localises to the kinetochore. Potential tumor suppressor. Acts as a KRAS-specific effector protein. May promote apoptosis and cell cycle arrest. Stabilizes STK3/MST2 by protecting it from proteasomal degradation. The polypeptide is Ras association domain-containing protein 2 (Rassf2) (Mus musculus (Mouse)).